The following is a 346-amino-acid chain: Protein-glutamate methylesterase/protein-glutamine glutaminase (346 aa).

Residues 6 to 123 (KVLVVDDSAF…SLDLEKVRDL (118 aa)) enclose the Response regulatory domain. Aspartate 57 is subject to 4-aspartylphosphate. The region spanning 155 to 346 (PFDKTIIVIG…ADSIVRQCKR (192 aa)) is the CheB-type methylesterase domain. Residues serine 166, histidine 193, and aspartate 289 contribute to the active site.

It belongs to the CheB family. Post-translationally, phosphorylated by CheA. Phosphorylation of the N-terminal regulatory domain activates the methylesterase activity.

The protein localises to the cytoplasm. It carries out the reaction [protein]-L-glutamate 5-O-methyl ester + H2O = L-glutamyl-[protein] + methanol + H(+). The enzyme catalyses L-glutaminyl-[protein] + H2O = L-glutamyl-[protein] + NH4(+). Functionally, involved in chemotaxis. Part of a chemotaxis signal transduction system that modulates chemotaxis in response to various stimuli. Catalyzes the demethylation of specific methylglutamate residues introduced into the chemoreceptors (methyl-accepting chemotaxis proteins or MCP) by CheR. Also mediates the irreversible deamidation of specific glutamine residues to glutamic acid. The polypeptide is Protein-glutamate methylesterase/protein-glutamine glutaminase (Halalkalibacterium halodurans (strain ATCC BAA-125 / DSM 18197 / FERM 7344 / JCM 9153 / C-125) (Bacillus halodurans)).